The sequence spans 491 residues: Protein nucleotidyltransferase YdiU (491 aa).

8 residues coordinate ATP: Gly-94, Gly-96, Arg-97, Lys-117, Asp-129, Gly-130, Arg-180, and Arg-187. The active-site Proton acceptor is Asp-256. 2 residues coordinate Mg(2+): Asn-257 and Asp-266. Asp-266 contributes to the ATP binding site.

This sequence belongs to the SELO family. Mg(2+) is required as a cofactor. Mn(2+) serves as cofactor.

It carries out the reaction L-seryl-[protein] + ATP = 3-O-(5'-adenylyl)-L-seryl-[protein] + diphosphate. It catalyses the reaction L-threonyl-[protein] + ATP = 3-O-(5'-adenylyl)-L-threonyl-[protein] + diphosphate. The catalysed reaction is L-tyrosyl-[protein] + ATP = O-(5'-adenylyl)-L-tyrosyl-[protein] + diphosphate. The enzyme catalyses L-histidyl-[protein] + UTP = N(tele)-(5'-uridylyl)-L-histidyl-[protein] + diphosphate. It carries out the reaction L-seryl-[protein] + UTP = O-(5'-uridylyl)-L-seryl-[protein] + diphosphate. It catalyses the reaction L-tyrosyl-[protein] + UTP = O-(5'-uridylyl)-L-tyrosyl-[protein] + diphosphate. In terms of biological role, nucleotidyltransferase involved in the post-translational modification of proteins. It can catalyze the addition of adenosine monophosphate (AMP) or uridine monophosphate (UMP) to a protein, resulting in modifications known as AMPylation and UMPylation. This is Protein nucleotidyltransferase YdiU from Clostridium botulinum (strain 657 / Type Ba4).